Here is a 153-residue protein sequence, read N- to C-terminus: Large ribosomal subunit protein uL15 (153 aa).

The segment at methionine 1–proline 47 is disordered.

This sequence belongs to the universal ribosomal protein uL15 family. Part of the 50S ribosomal subunit.

Functionally, binds to the 23S rRNA. The chain is Large ribosomal subunit protein uL15 from Dehalococcoides mccartyi (strain ATCC BAA-2100 / JCM 16839 / KCTC 5957 / BAV1).